Reading from the N-terminus, the 1194-residue chain is MGSVMSLGCSKRKATNQDVDSESRKRRKICSTNDAENCRFIQDESSWKHPWSLCANRVISVAAVALTNFRFQQDNQESNSSSLSLPSPATSVSRNWKHDVFPSFHGADVRRTFLSHIMESFRRKGIDTFIDNNIERSKSIGPELKEAIKGSKIAIVLLSRKYASSSWCLDELAEIMKCRQMVGQIVMTIFYEVDPTDIKKQTGEFGKAFTKTCRGKPKEQVERWRKALEDVATIAGYHSHSWRNEADMIEKISTDVSNMLNSFTPSRDFDGLVGMRAHMDMLEQLLRLDLDEVRMIGIWGPPGIGKTTIARFLFNQVSDRFQLSAIMVNIKGCYPRPCFDEYSAQLQLQNQMLSQMINHKDIMISHLGVAQERLRDKKVFLVLDEVDQLGQLDALAKETRWFGPGSRIIITTEDLGVLKAHGINHVYKVEYPSNDEAFQIFCMNAFGQKQPHEGFDEIAWEVTCLAGELPLGLKVLGSALRGKSKREWERTLPRLKTSLDGKIGSIIQFSYDVLCDEDKYLFLYIACLFNGESTTKVKELLGKFLDVKQGLHLLAQKSLISFDGERIHMHTLLEQFGRETSRKQFVHHGFTKRQLLVGARGICEVLDDDTTDSRRFIGIHLELSNTEEELNISEKVLERVHDFHFVRIDASFQPERLQLALQDLIYHSPKIRSLNWYGYESLCLPSTFNPEFLVELDMRSSNLRKLWEGTKQLRNLKWMDLSYSSYLKELPNLSTATNLEELKLRNCSSLVELPSSIEKLTSLQILDLENCSSLEKLPAIENATKLRELKLQNCSSLIELPLSIGTATNLKQLNISGCSSLVKLPSSIGDITDLEVFDLSNCSSLVTLPSSIGNLQNLCKLIMRGCSKLEALPININLKSLDTLNLTDCSQLKSFPEISTHISELRLKGTAIKEVPLSIMSWSPLADFQISYFESLMEFPHAFDIITKLHLSKDIQEVPPWVKRMSRLRDLSLNNCNNLVSLPQLSDSLDYIYADNCKSLERLDCCFNNPEIRLYFPKCFKLNQEARDLIMHTCIDAMFPGTQVPACFIHRATSGDSLKIKLKESPLPTTLRFKACIMLVKVNEELMSYDQTPMIVDIVIRDEHNDLKEKIYPSIYPSIYPLLTEHIYTFELDVEEVTSTELVFEFPQLNKRNWKIGECGILQRETRSLRRSSSPDLSPESSRVSSYDHCLRGD.

The tract at residues 1 to 27 (MGSVMSLGCSKRKATNQDVDSESRKRR) is disordered. In terms of domain architecture, TIR spans 96 to 260 (WKHDVFPSFH…KISTDVSNML (165 aa)). 105 to 110 (HGADVR) lines the NAD(+) pocket. Glu-171 is an active-site residue. Positions 280 to 535 (DMLEQLLRLD…ACLFNGESTT (256 aa)) constitute an NB-ARC domain. LRR repeat units lie at residues 623-647 (LSNTEEELNISEKVLERVHDFHFVR), 658-681 (QLALQDLIYHSPKIRSLNWYGYES), 690-713 (PEFLVELDMRSSNLRKLWEGTKQL), 714-737 (RNLKWMDLSYSSYLKELPNLSTAT), 739-760 (LEELKLRNCSSLVELPSSIEKL), 761-784 (TSLQILDLENCSSLEKLPAIENAT), 786-807 (LRELKLQNCSSLIELPLSIGTA), 808-831 (TNLKQLNISGCSSLVKLPSSIGDI), 832-855 (TDLEVFDLSNCSSLVTLPSSIGNL), 866-878 (CSKLEALPININL), 879-899 (KSLDTLNLTDCSQLKSFPEIS), 900-922 (THISELRLKGTAIKEVPLSIMSW), 943-965 (FDIITKLHLSKDIQEVPPWVKRM), and 966-991 (SRLRDLSLNNCNNLVSLPQLSDSLDY). Residues 1170 to 1194 (RRSSSPDLSPESSRVSSYDHCLRGD) are disordered. Over residues 1171–1185 (RSSSPDLSPESSRVS) the composition is skewed to low complexity.

This sequence belongs to the disease resistance TIR-NB-LRR family.

The catalysed reaction is NAD(+) + H2O = ADP-D-ribose + nicotinamide + H(+). Functionally, TIR-NB-LRR receptor-like protein that confers resistance to the pathogen Hyaloperonospora arabidopsis. Probably acts as a NAD(+) hydrolase (NADase): in response to activation, catalyzes cleavage of NAD(+) into ADP-D-ribose (ADPR) and nicotinamide; NAD(+) cleavage triggering a defense system that promotes cell death. The protein is Probable disease resistance protein RPP1 of Arabidopsis thaliana (Mouse-ear cress).